Here is a 706-residue protein sequence, read N- to C-terminus: Mitochondrial intermediate peptidase, mitochondrial (706 aa).

A mitochondrion-targeting transit peptide spans 1-29; the sequence is MWKLTRRLQPHINSTRWLVRNFRNGGAGD. The tract at residues 212-238 is disordered; it reads NPTYRSTSGGSRGSTRSAHKSKQKGFR. Low complexity predominate over residues 214-227; that stretch reads TYRSTSGGSRGSTR. A Zn(2+)-binding site is contributed by His-491. Glu-492 is a catalytic residue. 2 residues coordinate Zn(2+): His-495 and Glu-520.

Belongs to the peptidase M3 family. Requires Zn(2+) as cofactor.

It localises to the mitochondrion. In terms of biological role, aminopeptidase which cleaves preproteins, imported into the mitochondrion, to their mature size. Could cleave both preproteins and preprotein intermediates already cleaved by the mitochondrial processing peptidase (MPP). This Arabidopsis thaliana (Mouse-ear cress) protein is Mitochondrial intermediate peptidase, mitochondrial.